The chain runs to 40 residues: MTDTTGRIPLWIIGTVTGILVIGLIGIFFFGSYSGLGSSL.

Residues 10–30 form a helical membrane-spanning segment; it reads LWIIGTVTGILVIGLIGIFFF.

The protein belongs to the PsbJ family. As to quaternary structure, PSII is composed of 1 copy each of membrane proteins PsbA, PsbB, PsbC, PsbD, PsbE, PsbF, PsbH, PsbI, PsbJ, PsbK, PsbL, PsbM, PsbT, PsbX, PsbY, PsbZ, Psb30/Ycf12, at least 3 peripheral proteins of the oxygen-evolving complex and a large number of cofactors. It forms dimeric complexes.

It is found in the plastid membrane. Functionally, one of the components of the core complex of photosystem II (PSII). PSII is a light-driven water:plastoquinone oxidoreductase that uses light energy to abstract electrons from H(2)O, generating O(2) and a proton gradient subsequently used for ATP formation. It consists of a core antenna complex that captures photons, and an electron transfer chain that converts photonic excitation into a charge separation. The protein is Photosystem II reaction center protein J of Cuscuta exaltata (Tall dodder).